Consider the following 211-residue polypeptide: Thiamine-phosphate synthase (211 aa).

Residues 37 to 41 (QLRIK) and asparagine 69 contribute to the 4-amino-2-methyl-5-(diphosphooxymethyl)pyrimidine site. Mg(2+) is bound by residues aspartate 70 and aspartate 89. A 4-amino-2-methyl-5-(diphosphooxymethyl)pyrimidine-binding site is contributed by serine 108. A 2-[(2R,5Z)-2-carboxy-4-methylthiazol-5(2H)-ylidene]ethyl phosphate-binding site is contributed by 134 to 136 (TQT). Residue lysine 137 coordinates 4-amino-2-methyl-5-(diphosphooxymethyl)pyrimidine. 2-[(2R,5Z)-2-carboxy-4-methylthiazol-5(2H)-ylidene]ethyl phosphate-binding positions include glycine 166 and 186–187 (VS).

It belongs to the thiamine-phosphate synthase family. Mg(2+) is required as a cofactor.

The catalysed reaction is 2-[(2R,5Z)-2-carboxy-4-methylthiazol-5(2H)-ylidene]ethyl phosphate + 4-amino-2-methyl-5-(diphosphooxymethyl)pyrimidine + 2 H(+) = thiamine phosphate + CO2 + diphosphate. The enzyme catalyses 2-(2-carboxy-4-methylthiazol-5-yl)ethyl phosphate + 4-amino-2-methyl-5-(diphosphooxymethyl)pyrimidine + 2 H(+) = thiamine phosphate + CO2 + diphosphate. It carries out the reaction 4-methyl-5-(2-phosphooxyethyl)-thiazole + 4-amino-2-methyl-5-(diphosphooxymethyl)pyrimidine + H(+) = thiamine phosphate + diphosphate. It functions in the pathway cofactor biosynthesis; thiamine diphosphate biosynthesis; thiamine phosphate from 4-amino-2-methyl-5-diphosphomethylpyrimidine and 4-methyl-5-(2-phosphoethyl)-thiazole: step 1/1. Its function is as follows. Condenses 4-methyl-5-(beta-hydroxyethyl)thiazole monophosphate (THZ-P) and 2-methyl-4-amino-5-hydroxymethyl pyrimidine pyrophosphate (HMP-PP) to form thiamine monophosphate (TMP). In Salmonella paratyphi B (strain ATCC BAA-1250 / SPB7), this protein is Thiamine-phosphate synthase.